Consider the following 880-residue polypeptide: MPSIVSSLLLVVLLTSPLGAIPVLYPSPPPLPAYPSPGVRILRPPESLVAPLGDEVVLECETSLPPERFEWSYRRWTPNGTAVNGSPGAGFKYLKTSSMKANVTQEAAISRLKVLVRQDTLGEYRCNGWFGPLLVTSTTARLELATTSVKSQEPVTSLQWQITNGNSVLWPCGQPVRSNPAASWTFYRNGVELGPEYSGTGGNLFLRNVSVDSSGSYSCQATNPASGERIKSTSSMELQVVPSRGSQVKAPYLLPGQPGSQTVTAIEGGTLLLLCPGVGSPPPTAVWSSPDIVGAVNNKRTRVLAHALEISNVQIGDSGTYICYLDNGVRPPLEHFIQVKVEQPPQIVRPPWIDMVNEGERVQLECEATGVPTPEIYWLLNGKSSIYDTEAEQLPNGHLVLHSVLKRHAGYVQCFARNSLGEHSAGMSLQVTPKPIHSESTQQSDHNHSKANRGRRPAQMIPPSAPNVTRLSDESVMLRWMVPRNDGLAILFFKVQYRTVGEGKRKNWQTTNENIPYGRPEWNSEMGKSFTASVTDLKPQRTYRFRIMAVYTNNDNKESNMSAKFFLQPGAALDPMPVPEMLEIDEYSETAVVLHWRLDSDADEQLITGYYAYYRPSSSAGEYFKATIEGASSRSFTIGNLEAGTVYEFKLQSFSAESASEFSALKQGRTQRPMVSTTEEATLQTGVRDTTTPSHNETFSMSPIVTGTIGGGAVLILFVVTTCLCMWRRRNSRAHRGGGQNKPRMAELREDFVPLDSCSPTKQRQRSRHIHITLNPLAQQQQQALDEKNDAEHDMTYFQRQPTYDYDPGLRRMSSSSLRRSQRTLERAGSSNGNNNNLNQSADMGPVDNPGKPGRVLMKRPRLSSRSENLSSGSLNSVGV.

A signal peptide spans 1-20 (MPSIVSSLLLVVLLTSPLGA). Residues 21–703 (IPVLYPSPPP…SHNETFSMSP (683 aa)) are Extracellular-facing. Ig-like C2-type domains lie at 37 to 142 (PGVR…TARL), 154 to 235 (PVTS…STSS), 251 to 339 (PYLL…FIQV), and 345 to 432 (PQIV…LQVT). Intrachain disulfides connect Cys60–Cys126, Cys172–Cys219, Cys275–Cys323, and Cys366–Cys414. 3 N-linked (GlcNAc...) asparagine glycosylation sites follow: Asn79, Asn102, and Asn208. Residues 435–468 (PIHSESTQQSDHNHSKANRGRRPAQMIPPSAPNV) form a disordered region. N-linked (GlcNAc...) asparagine glycosylation is found at Asn447 and Asn467. Fibronectin type-III domains lie at 462-570 (PPSA…LQPG) and 578-673 (VPEM…TQRP). Arg498, Lys504, Lys506, and Arg544 together coordinate heparin. Asn560 is a glycosylation site (N-linked (GlcNAc...) asparagine). Residues 665–699 (LKQGRTQRPMVSTTEEATLQTGVRDTTTPSHNETF) are disordered. Residues 668–699 (GRTQRPMVSTTEEATLQTGVRDTTTPSHNETF) show a composition bias toward polar residues. Asn696 carries an N-linked (GlcNAc...) asparagine glycan. Residues 704-724 (IVTGTIGGGAVLILFVVTTCL) form a helical membrane-spanning segment. Residues 725-880 (CMWRRRNSRA…SSGSLNSVGV (156 aa)) lie on the Cytoplasmic side of the membrane. The interval 797–880 (YFQRQPTYDY…SSGSLNSVGV (84 aa)) is disordered. 2 stretches are compositionally biased toward low complexity: residues 827 to 839 (RAGS…NNLN) and 864 to 880 (SSRS…SVGV).

Belongs to the immunoglobulin superfamily. IHOG family. As to quaternary structure, homodimer. Heterotetramer; 2 iHog chains bind 2 hh chains when facilitated by heparin, heparin is required to promote high-affinity interactions between hh and iHog.

Its subcellular location is the membrane. Mediates response to the active Hedgehog (Hh) protein signal in embryos, functioning upstream or at the level of patched (ptc). In Drosophila ananassae (Fruit fly), this protein is Interference hedgehog.